Here is a 293-residue protein sequence, read N- to C-terminus: Formamidopyrimidine-DNA glycosylase (293 aa).

Pro-2 acts as the Schiff-base intermediate with DNA in catalysis. Glu-3 acts as the Proton donor in catalysis. Lys-58 (proton donor; for beta-elimination activity) is an active-site residue. Residues His-104, Arg-123, and Lys-166 each contribute to the DNA site. The segment at 257–293 (KVYDREGETCKTPACGGTIKRFTQNGRSTFWCPKCQK) adopts an FPG-type zinc-finger fold. The active-site Proton donor; for delta-elimination activity is Arg-283.

Belongs to the FPG family. In terms of assembly, monomer. It depends on Zn(2+) as a cofactor.

The enzyme catalyses Hydrolysis of DNA containing ring-opened 7-methylguanine residues, releasing 2,6-diamino-4-hydroxy-5-(N-methyl)formamidopyrimidine.. The catalysed reaction is 2'-deoxyribonucleotide-(2'-deoxyribose 5'-phosphate)-2'-deoxyribonucleotide-DNA = a 3'-end 2'-deoxyribonucleotide-(2,3-dehydro-2,3-deoxyribose 5'-phosphate)-DNA + a 5'-end 5'-phospho-2'-deoxyribonucleoside-DNA + H(+). In terms of biological role, involved in base excision repair of DNA damaged by oxidation or by mutagenic agents. Acts as a DNA glycosylase that recognizes and removes damaged bases. Has a preference for oxidized purines, such as 7,8-dihydro-8-oxoguanine (8-oxoG). Has AP (apurinic/apyrimidinic) lyase activity and introduces nicks in the DNA strand. Cleaves the DNA backbone by beta-delta elimination to generate a single-strand break at the site of the removed base with both 3'- and 5'-phosphates. This is Formamidopyrimidine-DNA glycosylase from Bradyrhizobium diazoefficiens (strain JCM 10833 / BCRC 13528 / IAM 13628 / NBRC 14792 / USDA 110).